We begin with the raw amino-acid sequence, 199 residues long: Shikimate kinase (199 aa).

14 to 19 (GSGKST) is a binding site for ATP. Position 18 (S18) interacts with Mg(2+). D36, R60, and G82 together coordinate substrate. R120 serves as a coordination point for ATP. Position 147 (R147) interacts with substrate. The tract at residues 179–199 (YVRRAEKNQNSHSQTKKQSRK) is disordered.

This sequence belongs to the shikimate kinase family. As to quaternary structure, monomer. The cofactor is Mg(2+).

Its subcellular location is the cytoplasm. It carries out the reaction shikimate + ATP = 3-phosphoshikimate + ADP + H(+). It participates in metabolic intermediate biosynthesis; chorismate biosynthesis; chorismate from D-erythrose 4-phosphate and phosphoenolpyruvate: step 5/7. Functionally, catalyzes the specific phosphorylation of the 3-hydroxyl group of shikimic acid using ATP as a cosubstrate. This Chlorobium phaeobacteroides (strain BS1) protein is Shikimate kinase.